We begin with the raw amino-acid sequence, 294 residues long: Protoheme IX farnesyltransferase (294 aa).

Helical transmembrane passes span 22-42 (VTQL…PELP), 46-66 (IVVA…AINC), 89-109 (ITVP…MWVL), 116-136 (LTMW…TIIL), 143-163 (NIVI…AAVA), 170-190 (AWIL…ALAL), 212-232 (FTQF…MLPF), 234-254 (VGMS…IFVW), and 272-292 (FAYS…DHYL).

The protein belongs to the UbiA prenyltransferase family. Protoheme IX farnesyltransferase subfamily.

The protein resides in the cell inner membrane. It carries out the reaction heme b + (2E,6E)-farnesyl diphosphate + H2O = Fe(II)-heme o + diphosphate. It functions in the pathway porphyrin-containing compound metabolism; heme O biosynthesis; heme O from protoheme: step 1/1. Functionally, converts heme B (protoheme IX) to heme O by substitution of the vinyl group on carbon 2 of heme B porphyrin ring with a hydroxyethyl farnesyl side group. The sequence is that of Protoheme IX farnesyltransferase from Janthinobacterium sp. (strain Marseille) (Minibacterium massiliensis).